A 234-amino-acid chain; its full sequence is tRNA (guanine-N(1)-)-methyltransferase (234 aa).

Residues glycine 112 and 132–137 contribute to the S-adenosyl-L-methionine site; that span reads IGDFIL.

It belongs to the RNA methyltransferase TrmD family. In terms of assembly, homodimer.

The protein localises to the cytoplasm. The enzyme catalyses guanosine(37) in tRNA + S-adenosyl-L-methionine = N(1)-methylguanosine(37) in tRNA + S-adenosyl-L-homocysteine + H(+). Specifically methylates guanosine-37 in various tRNAs. This Campylobacter jejuni subsp. jejuni serotype O:6 (strain 81116 / NCTC 11828) protein is tRNA (guanine-N(1)-)-methyltransferase.